Consider the following 485-residue polypeptide: Glutamate--tRNA ligase (485 aa).

A 'HIGH' region motif is present at residues 11–21 (PSPTGYMHVGN). Residues cysteine 108, cysteine 110, cysteine 135, and aspartate 137 each coordinate Zn(2+). The short motif at 252–256 (KLSKR) is the 'KMSKS' region element. ATP is bound at residue lysine 255.

This sequence belongs to the class-I aminoacyl-tRNA synthetase family. Glutamate--tRNA ligase type 1 subfamily. In terms of assembly, monomer. Zn(2+) is required as a cofactor.

It is found in the cytoplasm. It catalyses the reaction tRNA(Glu) + L-glutamate + ATP = L-glutamyl-tRNA(Glu) + AMP + diphosphate. Functionally, catalyzes the attachment of glutamate to tRNA(Glu) in a two-step reaction: glutamate is first activated by ATP to form Glu-AMP and then transferred to the acceptor end of tRNA(Glu). The chain is Glutamate--tRNA ligase from Clostridium botulinum (strain Loch Maree / Type A3).